The sequence spans 63 residues: Toxin Tx7335 (63 aa).

4 disulfide bridges follow: C3/C24, C17/C39, C25/C55, and C56/C61.

In terms of processing, contains 4 disulfide bonds. As to expression, expressed by the venom gland.

It is found in the secreted. Activates bacterial pH-gated potassium channel KcsA by binding to its extracellular domain, probably at a site different from channel inhibitors. Increases both mean open time and open probability of KscA. This chain is Toxin Tx7335, found in Dendroaspis angusticeps (Eastern green mamba).